We begin with the raw amino-acid sequence, 396 residues long: 3-hydroxykynurenine transaminase (396 aa).

Residues 43 to 44 (SN) form a binds to and confers specificity for 3-hydroxykynurenine; shared with dimeric partner region. Residues 77–79 (SAH), S154, and Q204 contribute to the pyridoxal 5'-phosphate site. S154 contacts substrate. An N6-(pyridoxal phosphate)lysine modification is found at K205. Pyridoxal 5'-phosphate contacts are provided by Y256 and T259. Residue R356 coordinates substrate.

This sequence belongs to the class-V pyridoxal-phosphate-dependent aminotransferase family. In terms of assembly, homodimer. The cofactor is pyridoxal 5'-phosphate. Expressed in gut and ovaries.

It localises to the peroxisome. It catalyses the reaction L-kynurenine + glyoxylate = kynurenate + glycine + H2O. It carries out the reaction 3-hydroxy-L-kynurenine + glyoxylate = xanthurenate + glycine + H2O. The catalysed reaction is 3-hydroxy-L-kynurenine + pyruvate = xanthurenate + L-alanine + H2O. The enzyme catalyses glyoxylate + L-alanine = glycine + pyruvate. It functions in the pathway amino-acid degradation; L-kynurenine degradation; kynurenate from L-kynurenine: step 1/2. Functionally, catalyzes the pyridoxal 5'-phosphate-dependent transamination of both 3-hydroxykynurenine and L-kynurenine to xanthurenic acid and kynurenic acid, respectively, preferentially using the alpha-ketoacid glyoxylate as the amino group acceptor. Although glyoxylate is the preferred amino group acceptor, transamination of 3-hydroxykynurenine also works with pyruvate as the amino acceptor in vitro. Involved in the detoxification of cytotoxic metabolite 3-hydroxykynurenine generated by the hydroxylation of L-kynurenine, an intermediate in the tryptophan catabolism pathway. The Plasmodium parasite uses xanthurenic acid produced in the midgut to activate its gametocytes ingested during a blood meal. Also catalyzes, although with a lesser efficiency, the transamination of alanine with glyoxylate as an amino group acceptor. May play a role in the detoxification of glyoxylate, a toxic plant metabolite from the diet. The sequence is that of 3-hydroxykynurenine transaminase from Anopheles gambiae (African malaria mosquito).